Reading from the N-terminus, the 311-residue chain is Ribonuclease Z (311 aa).

7 residues coordinate Zn(2+): His-63, His-65, Asp-67, His-68, His-141, Asp-212, and His-270. Asp-67 serves as the catalytic Proton acceptor.

Belongs to the RNase Z family. As to quaternary structure, homodimer. Zn(2+) is required as a cofactor.

The enzyme catalyses Endonucleolytic cleavage of RNA, removing extra 3' nucleotides from tRNA precursor, generating 3' termini of tRNAs. A 3'-hydroxy group is left at the tRNA terminus and a 5'-phosphoryl group is left at the trailer molecule.. Its function is as follows. Zinc phosphodiesterase, which displays some tRNA 3'-processing endonuclease activity. Probably involved in tRNA maturation, by removing a 3'-trailer from precursor tRNA. The polypeptide is Ribonuclease Z (Lactiplantibacillus plantarum (strain ATCC BAA-793 / NCIMB 8826 / WCFS1) (Lactobacillus plantarum)).